Consider the following 143-residue polypeptide: MLSVDPEKKRAKANAVDIYVGRRIRQRRRWQNMSQAALGEAIGVTFQQVQKYEKGSNRVGAGRLQQISDALEVHPSYFFEDMPDDTQSIGQGAPNQAYIPPEVIEFAASDEGVELIRAFSRVGNLNVRCRIVKLLKSLGEHDW.

The region spanning 24-78 is the HTH cro/C1-type domain; sequence IRQRRRWQNMSQAALGEAIGVTFQQVQKYEKGSNRVGAGRLQQISDALEVHPSYF. Residues 35–54 constitute a DNA-binding region (H-T-H motif); the sequence is QAALGEAIGVTFQQVQKYEK.

This is an uncharacterized protein from Sinorhizobium fredii (strain NBRC 101917 / NGR234).